The sequence spans 448 residues: Chromosomal replication initiator protein DnaA (448 aa).

The domain I, interacts with DnaA modulators stretch occupies residues 1–72; it reads MPDLQELWNY…VEGAYEFAEI (72 aa). The domain II stretch occupies residues 72 to 110; it reads IELTPIFVLPGESDNLTPLEPEEEHVLTKAETPTFLRET. Positions 111–327 are domain III, AAA+ region; sequence HLNSKYTFDT…GALVRVQAYA (217 aa). Residues glycine 155, glycine 157, lysine 158, and threonine 159 each coordinate ATP. Positions 328–448 are domain IV, binds dsDNA; sequence TMQNAEITTS…ILDLKNTMKS (121 aa).

It belongs to the DnaA family. Oligomerizes as a right-handed, spiral filament on DNA at oriC.

It localises to the cytoplasm. Its function is as follows. Plays an essential role in the initiation and regulation of chromosomal replication. ATP-DnaA binds to the origin of replication (oriC) to initiate formation of the DNA replication initiation complex once per cell cycle. Binds the DnaA box (a 9 base pair repeat at the origin) and separates the double-stranded (ds)DNA. Forms a right-handed helical filament on oriC DNA; dsDNA binds to the exterior of the filament while single-stranded (ss)DNA is stabiized in the filament's interior. The ATP-DnaA-oriC complex binds and stabilizes one strand of the AT-rich DNA unwinding element (DUE), permitting loading of DNA polymerase. After initiation quickly degrades to an ADP-DnaA complex that is not apt for DNA replication. Binds acidic phospholipids. In Latilactobacillus sakei subsp. sakei (strain 23K) (Lactobacillus sakei subsp. sakei), this protein is Chromosomal replication initiator protein DnaA.